The sequence spans 548 residues: Probable malate:quinone oxidoreductase (548 aa).

The disordered stretch occupies residues 522–548 (KPQAADSTPKPQLKPKPVQKEVADIAL). Residues 539-548 (VQKEVADIAL) show a composition bias toward basic and acidic residues.

Belongs to the MQO family. The cofactor is FAD.

It catalyses the reaction (S)-malate + a quinone = a quinol + oxaloacetate. The protein operates within carbohydrate metabolism; tricarboxylic acid cycle; oxaloacetate from (S)-malate (quinone route): step 1/1. This is Probable malate:quinone oxidoreductase from Escherichia coli O9:H4 (strain HS).